The primary structure comprises 445 residues: MAAPEERDLTQEQTEKLLQFQDLTGIESMDQCRHTLEQHNWNIEAAVQDRLNEQEGVPSVFNPPPSRPLQVNTADHRIYSYVVSRPQPRGLLGWGYYLIMLPFRFTYYTILDIFRFALRFIRPDPRSRVTDPVGDIVSFMHSFEEKYGRAHPVFYQGTYSQALNDAKRELRFLLVYLHGDDHQDSDEFCRNTLCAPEVISLINTRMLFWACSTNKPEGYRVSQALRENTYPFLAMIMLKDRRMTVVGRLEGLIQPDDLINQLTFIMDANQTYLVSERLEREERNQTQVLRQQQDEAYLASLRADQEKERKKREERERKRRKEEEVQQQKLAEERRRQNLQEEKERKLECLPPEPSPDDPESVKIIFKLPNDSRVERRFHFSQSLTVIHDFLFSLKESPEKFQIEANFPRRVLPCIPSEEWPNPPTLQEAGLSHTEVLFVQDLTDE.

Position 2 is an N-acetylalanine (Ala-2). Residues 12–48 (EQTEKLLQFQDLTGIESMDQCRHTLEQHNWNIEAAVQ) enclose the UBA domain. Lys-167 bears the N6-acetyllysine mark. The stretch at 275 to 350 (SERLEREERN…EEKERKLECL (76 aa)) forms a coiled coil. The disordered stretch occupies residues 299 to 361 (ASLRADQEKE…PEPSPDDPES (63 aa)). The segment covering 303–348 (ADQEKERKKREERERKRRKEEEVQQQKLAEERRRQNLQEEKERKLE) has biased composition (basic and acidic residues). The region spanning 357–439 (DDPESVKIIF…GLSHTEVLFV (83 aa)) is the UBX domain.

Identified in a complex that contains SEL1L, OS9, FAF2/UBXD8, UBE2J1/UBC6E and AUP1. Interacts with YOD1. Interacts (via N-terminus) with UBQLN2 (via C-terminus). Interacts with PNPLA2 and UBAC2. Interacts with ZFAND2B; probably through VCP. Interacts with LMBR1L. In terms of tissue distribution, broadly expressed, with highest levels in brain.

It localises to the cytoplasm. The protein resides in the lipid droplet. The protein localises to the endoplasmic reticulum. In terms of biological role, plays an important role in endoplasmic reticulum-associated degradation (ERAD) that mediates ubiquitin-dependent degradation of misfolded endoplasmic reticulum proteins. By controlling the steady-state expression of the IGF1R receptor, indirectly regulates the insulin-like growth factor receptor signaling pathway. Involved in inhibition of lipid droplet degradation by binding to phospholipase PNPL2 and inhibiting its activity by promoting dissociation of PNPL2 from its endogenous activator, ABHD5 which inhibits the rate of triacylglycerol hydrolysis. Involved in stress granule disassembly: associates with ubiquitinated G3BP1 in response to heat shock, thereby promoting interaction between ubiquitinated G3BP1 and VCP, followed by G3BP1 extraction from stress granules and stress granule disassembly. This is FAS-associated factor 2 from Homo sapiens (Human).